Reading from the N-terminus, the 208-residue chain is 3-demethoxyubiquinol 3-hydroxylase (208 aa).

Positions 57, 87, 90, 139, 171, and 174 each coordinate Fe cation.

The protein belongs to the COQ7 family. The cofactor is Fe cation.

The protein localises to the cell membrane. It carries out the reaction a 5-methoxy-2-methyl-3-(all-trans-polyprenyl)benzene-1,4-diol + AH2 + O2 = a 3-demethylubiquinol + A + H2O. It participates in cofactor biosynthesis; ubiquinone biosynthesis. In terms of biological role, catalyzes the hydroxylation of 2-nonaprenyl-3-methyl-6-methoxy-1,4-benzoquinol during ubiquinone biosynthesis. This Burkholderia thailandensis (strain ATCC 700388 / DSM 13276 / CCUG 48851 / CIP 106301 / E264) protein is 3-demethoxyubiquinol 3-hydroxylase.